A 309-amino-acid chain; its full sequence is Olfactory receptor 14A16 (309 aa).

At 1–23 the chain is on the extracellular side; the sequence is MANLTIVTEFILMGFSTNKNMCI. A glycan (N-linked (GlcNAc...) asparagine) is linked at Asn3. Residues 24-44 form a helical membrane-spanning segment; sequence LHSILFLLIYLCALMGNVLII. Residues 45 to 52 lie on the Cytoplasmic side of the membrane; the sequence is MITTLDHH. A helical transmembrane segment spans residues 53–73; that stretch reads LHTPVYFFLKNLSFLDLCLIS. Residues 74–97 are Extracellular-facing; sequence VTAPKSIANSLIHNNSISFLGCVS. Asn87 carries N-linked (GlcNAc...) asparagine glycosylation. A disulfide bridge links Cys95 with Cys187. Residues 98-118 form a helical membrane-spanning segment; that stretch reads QVFLLLSSASAELLLLTVMSF. Residues 119 to 131 lie on the Cytoplasmic side of the membrane; the sequence is DRYTAICHPLHYD. The helical transmembrane segment at 132–152 threads the bilayer; it reads VIMDRSTCVQRATVSWLYGGL. Residues 153 to 194 lie on the Extracellular side of the membrane; sequence IAVMHTAGTFSLSYCGSNMVHQFFCDIPQLLAISCSENLIRE. The helical transmembrane segment at 195-215 threads the bilayer; it reads IALILINVVLDFCCFIVIIIT. Residues 216 to 235 lie on the Cytoplasmic side of the membrane; that stretch reads YVHVFSTVKKIPSTEGQSKA. Residues 236–255 traverse the membrane as a helical segment; sequence YSICLPHLLVVLFLSTGFIA. The Extracellular segment spans residues 256–268; the sequence is YLKPASESPSILD. The chain crosses the membrane as a helical span at residues 269-289; it reads AVISVFYTMLPPTFNPIIYSL. The Cytoplasmic segment spans residues 290 to 309; it reads RNKAIKVALGMLIKGKLTKK.

This sequence belongs to the G-protein coupled receptor 1 family.

The protein resides in the cell membrane. In terms of biological role, odorant receptor. In Homo sapiens (Human), this protein is Olfactory receptor 14A16 (OR14A16).